Here is a 262-residue protein sequence, read N- to C-terminus: Taurine import ATP-binding protein TauB (262 aa).

One can recognise an ABC transporter domain in the interval 4–233 (LELERISAQY…RYAAGESARA (230 aa)). 38-45 (GPSGSGKT) provides a ligand contact to ATP.

The protein belongs to the ABC transporter superfamily. Taurine importer (TC 3.A.1.17.1) family. As to quaternary structure, the complex is composed of two ATP-binding proteins (TauB), two transmembrane proteins (TauC) and a solute-binding protein (TauA).

It is found in the cell inner membrane. It catalyses the reaction taurine(out) + ATP + H2O = taurine(in) + ADP + phosphate + H(+). Functionally, part of the ABC transporter complex TauABC involved in taurine import. Responsible for energy coupling to the transport system. The chain is Taurine import ATP-binding protein TauB from Pseudomonas putida (strain ATCC 47054 / DSM 6125 / CFBP 8728 / NCIMB 11950 / KT2440).